Here is a 2460-residue protein sequence, read N- to C-terminus: Reducing polyketide synthase BOA6 (2460 aa).

Residues 5 to 438 (NEPIAVIGTG…GTNAHAILES (434 aa)) form the Ketosynthase family 3 (KS3) domain. Catalysis depends on for beta-ketoacyl synthase activity residues Cys178, His317, and His360. Residues 549-864 (VFTGQGAQWP…PYTGVLSRGD (316 aa)) form a malonyl-CoA:ACP transacylase (MAT) domain region. The segment at 938–1073 (HELLGVRCAD…GRIKMTLGTP (136 aa)) is N-terminal hotdog fold. Residues 938–1244 (HELLGVRCAD…QMQSFTAARP (307 aa)) form a dehydratase (DH) domain region. One can recognise a PKS/mFAS DH domain in the interval 938 to 1245 (HELLGVRCAD…MQSFTAARPS (308 aa)). His970 acts as the Proton acceptor; for dehydratase activity in catalysis. The segment at 1088–1245 (LGPLNVDRFY…MQSFTAARPS (158 aa)) is C-terminal hotdog fold. The active-site Proton donor; for dehydratase activity is Asp1145. Residues 1399 to 1586 (NKFVTAAMKK…VNDFKDKSRY (188 aa)) are methyltransferase (MT) domain. The interval 2098 to 2266 (SYLLAGLTGD…KRGGVASVIH (169 aa)) is ketoreductase (KR) domain. Residues 2378-2456 (DEVLGVMQKC…DLCELACEEY (79 aa)) form the Carrier domain. Residue Ser2416 is modified to O-(pantetheine 4'-phosphoryl)serine.

Its pathway is polyketide biosynthesis. Functionally, reducing polyketide synthase; part of the gene cluster A that mediates the biosynthesis of botcinic acid and its botcinin derivatives, acetate-derived polyketides that contribute to virulence when combined with the sesquiterpene botrydial. Botcinic acid and its derivatives have been shown to induce chlorosis and necrosis during host plant infection, but also have antifungal activities. Two polyketide synthases, BOA6 and BOA9, are involved in the biosynthesis of botcinins. BOA6 mediates the formation of the per-methylated tetraketide core by condensation of four units of malonyl-CoA with one unit of acetyl-CoA, which would be methylated in activated methylene groups to yield a bicyclic acid intermediate that could then either be converted to botrylactone derivatives or lose the starter acetate unit through a retro-Claisen type C-C bond cleavage to yield botcinin derivatives. The second polyketide synthase, BOA9, is probably required for the biosynthesis of the tetraketide side chain of botcinins. The methyltransferase (MT) domain within BOA6 is probably responsible for the incorporation of four methyl groups. The trans-enoyl reductase BOA5 might take over the enoyl reductase function of BOA6 that misses an ER domain. The monooxygenases BOA2, BOA3 and BOA4 might be involved in further hydroxylations at C4, C5 and C8, whereas BOA7, close to BOA9, could potentially be involved in the hydroxylation at C4 in the side chain of botcinins. The chain is Reducing polyketide synthase BOA6 from Botryotinia fuckeliana (strain B05.10) (Noble rot fungus).